A 253-amino-acid chain; its full sequence is Probable transcriptional regulatory protein A1G_04400 (253 aa).

The tract at residues 1–21 is disordered; the sequence is MAGHSKFKNIQHRKGAQDKKR.

Belongs to the TACO1 family.

The protein resides in the cytoplasm. The polypeptide is Probable transcriptional regulatory protein A1G_04400 (Rickettsia rickettsii (strain Sheila Smith)).